Here is a 67-residue protein sequence, read N- to C-terminus: ATP synthase protein 8 (67 aa).

The chain crosses the membrane as a helical span at residues Thr-8 to Met-24. Lys-54 is subject to N6-acetyllysine; alternate. Lys-54 is modified (N6-succinyllysine; alternate). Position 57 is an N6-acetyllysine (Lys-57).

Belongs to the ATPase protein 8 family. As to quaternary structure, F-type ATPases have 2 components, CF(1) - the catalytic core - and CF(0) - the membrane proton channel. Component of an ATP synthase complex composed of ATP5PB, ATP5MC1, ATP5F1E, ATP5PD, ATP5ME, ATP5PF, ATP5MF, MT-ATP6, MT-ATP8, ATP5F1A, ATP5F1B, ATP5F1D, ATP5F1C, ATP5PO, ATP5MG, ATP5MK and ATP5MJ. Interacts with PRICKLE3.

It is found in the mitochondrion membrane. Mitochondrial membrane ATP synthase (F(1)F(0) ATP synthase or Complex V) produces ATP from ADP in the presence of a proton gradient across the membrane which is generated by electron transport complexes of the respiratory chain. F-type ATPases consist of two structural domains, F(1) - containing the extramembraneous catalytic core and F(0) - containing the membrane proton channel, linked together by a central stalk and a peripheral stalk. During catalysis, ATP synthesis in the catalytic domain of F(1) is coupled via a rotary mechanism of the central stalk subunits to proton translocation. Part of the complex F(0) domain. Minor subunit located with subunit a in the membrane. The polypeptide is ATP synthase protein 8 (MT-ATP8) (Microtus pennsylvanicus (Meadow vole)).